Consider the following 206-residue polypeptide: Small ribosomal subunit protein uS4 (206 aa).

Positions 93 to 156 (CRLDNLVYRL…RKIKIIAEAL (64 aa)) constitute an S4 RNA-binding domain.

It belongs to the universal ribosomal protein uS4 family. As to quaternary structure, part of the 30S ribosomal subunit. Contacts protein S5. The interaction surface between S4 and S5 is involved in control of translational fidelity.

Its function is as follows. One of the primary rRNA binding proteins, it binds directly to 16S rRNA where it nucleates assembly of the body of the 30S subunit. With S5 and S12 plays an important role in translational accuracy. In Protochlamydia amoebophila (strain UWE25), this protein is Small ribosomal subunit protein uS4.